The sequence spans 467 residues: Adenosylhomocysteinase (467 aa).

Substrate contacts are provided by T68, D144, and E169. Position 170–172 (T170–T172) interacts with NAD(+). Substrate is bound by residues K199 and D203. Residues N204, G233–G238, E256, N305, I326–H328, and N373 contribute to the NAD(+) site.

The protein belongs to the adenosylhomocysteinase family. The cofactor is NAD(+).

The protein localises to the cytoplasm. The enzyme catalyses S-adenosyl-L-homocysteine + H2O = L-homocysteine + adenosine. It participates in amino-acid biosynthesis; L-homocysteine biosynthesis; L-homocysteine from S-adenosyl-L-homocysteine: step 1/1. In terms of biological role, may play a key role in the regulation of the intracellular concentration of adenosylhomocysteine. This chain is Adenosylhomocysteinase, found in Acinetobacter baylyi (strain ATCC 33305 / BD413 / ADP1).